A 375-amino-acid chain; its full sequence is Alcohol dehydrogenase 1 (375 aa).

S2 is subject to N-acetylserine. The Zn(2+) site is built by C47, H68, C98, C101, C104, C112, and C175. Residues 200–205, D224, and K229 contribute to the NAD(+) site; that span reads GLGGVG. K234 bears the N6-succinyllysine mark. Residue 293-295 participates in NAD(+) binding; it reads VGV. An N6-succinyllysine modification is found at K340. R370 is an NAD(+) binding site.

Belongs to the zinc-containing alcohol dehydrogenase family. In terms of assembly, homodimer. Zn(2+) serves as cofactor.

The protein resides in the cytoplasm. The catalysed reaction is a primary alcohol + NAD(+) = an aldehyde + NADH + H(+). The enzyme catalyses a secondary alcohol + NAD(+) = a ketone + NADH + H(+). This is Alcohol dehydrogenase 1 (ADH1) from Oryctolagus cuniculus (Rabbit).